We begin with the raw amino-acid sequence, 505 residues long: L-carnitine/gamma-butyrobetaine antiporter (505 aa).

The next 12 helical transmembrane spans lie at 10–30, 51–71, 92–112, 143–163, 195–215, 231–251, 263–283, 316–336, 347–367, 403–423, 446–466, and 475–495; these read IEPKVFFPPLIIVGILCWLTV, WGWAFEWYMVVMLFGWFWLVF, IFMMFASCTSAAVLFWGSIEI, GPLPWATYSFLSVAFAYFFFV, FYLVALIFAMGTSLGLATPLV, LDAIIITCWIILNAICVACGL, SYLSFLMLGWVFIVSGASFIM, WTVFYWAWWVIYAIQMSIFLA, LCFGMVMGLTASTWILWTVLG, LSTATMWGFFILCFIATVTLI, LLVRIGWSVLVGIIGIVLLAL, and AIIAGGCPLFFVNIMVTLSFI.

The protein belongs to the BCCT transporter (TC 2.A.15) family. CaiT subfamily. Homotrimer.

The protein resides in the cell inner membrane. The catalysed reaction is 4-(trimethylamino)butanoate(in) + (R)-carnitine(out) = 4-(trimethylamino)butanoate(out) + (R)-carnitine(in). It participates in amine and polyamine metabolism; carnitine metabolism. Its function is as follows. Catalyzes the exchange of L-carnitine for gamma-butyrobetaine. In Salmonella agona (strain SL483), this protein is L-carnitine/gamma-butyrobetaine antiporter.